A 447-amino-acid chain; its full sequence is uncharacterized protein (447 aa).

3 helical membrane-spanning segments follow: residues 28–48 (IVIV…YPAV), 241–261 (IDAS…YYAI), and 397–417 (PFVL…LSIF).

The protein resides in the membrane. This is an uncharacterized protein from Schizosaccharomyces pombe (strain 972 / ATCC 24843) (Fission yeast).